Here is a 366-residue protein sequence, read N- to C-terminus: Glutamate 5-kinase (366 aa).

Lysine 17 is a binding site for ATP. Substrate contacts are provided by serine 57, aspartate 144, and asparagine 156. ATP contacts are provided by residues 176 to 177 (SD) and 216 to 222 (TGGMVSK). Positions 278 to 356 (SGALTLDDGA…SDLPAEMRRP (79 aa)) constitute a PUA domain.

Belongs to the glutamate 5-kinase family.

The protein resides in the cytoplasm. The enzyme catalyses L-glutamate + ATP = L-glutamyl 5-phosphate + ADP. It functions in the pathway amino-acid biosynthesis; L-proline biosynthesis; L-glutamate 5-semialdehyde from L-glutamate: step 1/2. Functionally, catalyzes the transfer of a phosphate group to glutamate to form L-glutamate 5-phosphate. This Mycolicibacterium vanbaalenii (strain DSM 7251 / JCM 13017 / BCRC 16820 / KCTC 9966 / NRRL B-24157 / PYR-1) (Mycobacterium vanbaalenii) protein is Glutamate 5-kinase.